The primary structure comprises 374 residues: UDP-N-acetylglucosamine--N-acetylmuramyl-(pentapeptide) pyrophosphoryl-undecaprenol N-acetylglucosamine transferase (374 aa).

Residues 13–15 (TGG), N124, R165, S193, and Q294 each bind UDP-N-acetyl-alpha-D-glucosamine.

It belongs to the glycosyltransferase 28 family. MurG subfamily.

The protein resides in the cell inner membrane. It carries out the reaction di-trans,octa-cis-undecaprenyl diphospho-N-acetyl-alpha-D-muramoyl-L-alanyl-D-glutamyl-meso-2,6-diaminopimeloyl-D-alanyl-D-alanine + UDP-N-acetyl-alpha-D-glucosamine = di-trans,octa-cis-undecaprenyl diphospho-[N-acetyl-alpha-D-glucosaminyl-(1-&gt;4)]-N-acetyl-alpha-D-muramoyl-L-alanyl-D-glutamyl-meso-2,6-diaminopimeloyl-D-alanyl-D-alanine + UDP + H(+). It functions in the pathway cell wall biogenesis; peptidoglycan biosynthesis. Cell wall formation. Catalyzes the transfer of a GlcNAc subunit on undecaprenyl-pyrophosphoryl-MurNAc-pentapeptide (lipid intermediate I) to form undecaprenyl-pyrophosphoryl-MurNAc-(pentapeptide)GlcNAc (lipid intermediate II). This is UDP-N-acetylglucosamine--N-acetylmuramyl-(pentapeptide) pyrophosphoryl-undecaprenol N-acetylglucosamine transferase from Rhizobium etli (strain ATCC 51251 / DSM 11541 / JCM 21823 / NBRC 15573 / CFN 42).